The primary structure comprises 277 residues: Uridine-cytidine kinase 1 (277 aa).

Residue 24 to 32 participates in ATP binding; the sequence is GGTASGKST. Substrate is bound by residues D81, Y109, H114, R163, R172, and Q180. ATP is bound at residue D209. A disordered region spans residues 241–277; sequence NHGRSLKRGVAEHGENPSGSSSNLTKRPLLEPSTRPH.

It belongs to the uridine kinase family.

The catalysed reaction is uridine + ATP = UMP + ADP + H(+). The enzyme catalyses cytidine + ATP = CMP + ADP + H(+). It functions in the pathway pyrimidine metabolism; CTP biosynthesis via salvage pathway; CTP from cytidine: step 1/3. Its pathway is pyrimidine metabolism; UMP biosynthesis via salvage pathway; UMP from uridine: step 1/1. Functionally, phosphorylates uridine and cytidine to uridine monophosphate and cytidine monophosphate. Does not phosphorylate deoxyribonucleosides or purine ribonucleosides. Can use ATP or GTP as a phosphate donor. This Danio rerio (Zebrafish) protein is Uridine-cytidine kinase 1 (uck1).